Here is a 451-residue protein sequence, read N- to C-terminus: uncharacterized protein (451 aa).

Positions 1–18 are cleaved as a signal peptide; the sequence is MRTRITLALAVLLLLLAG. Cys-19 carries N-palmitoyl cysteine lipidation. Cys-19 is lipidated: S-diacylglycerol cysteine. The segment at 424–451 is disordered; it reads TSADPPPGVPRAGKRNIRDATSRLPSTP.

It localises to the cell membrane. May participate in oleandomycin glycosylation and secretion during antibiotic production. This is an uncharacterized protein from Streptomyces antibioticus.